The following is a 207-amino-acid chain: GTP-binding protein RHO1 (207 aa).

18 to 25 (GDGACGKT) is a binding site for GTP. The Effector region signature appears at 40–48 (YVPTVFDNY). Residues 65-69 (DTAGQ) and 123-126 (CKAD) each bind GTP. Positions 187-207 (GKQGKSKAKSDKKKKKKCVVL) are disordered. Residues 190 to 207 (GKSKAKSDKKKKKKCVVL) are compositionally biased toward basic residues. Cys-204 carries the cysteine methyl ester modification. Cys-204 is lipidated: S-geranylgeranyl cysteine. Positions 205 to 207 (VVL) are cleaved as a propeptide — removed in mature form.

It belongs to the small GTPase superfamily. Rho family.

The protein localises to the cell membrane. Its function is as follows. Involved in the regulation of actin polarization. Rho proteins are required for distinct steps during polarized hyphal growth of A.gossypii. This is GTP-binding protein RHO1 (RHO1) from Eremothecium gossypii (strain ATCC 10895 / CBS 109.51 / FGSC 9923 / NRRL Y-1056) (Yeast).